Consider the following 132-residue polypeptide: DNA-directed RNA polymerase subunit omega (132 aa).

Positions 90–109 (SSEAGGVLGTSSEEEGSSFD) are disordered.

This sequence belongs to the RNA polymerase subunit omega family. In terms of assembly, the RNAP catalytic core consists of 2 alpha, 1 beta, 1 beta' and 1 omega subunit. When a sigma factor is associated with the core the holoenzyme is formed, which can initiate transcription.

The enzyme catalyses RNA(n) + a ribonucleoside 5'-triphosphate = RNA(n+1) + diphosphate. Promotes RNA polymerase assembly. Latches the N- and C-terminal regions of the beta' subunit thereby facilitating its interaction with the beta and alpha subunits. The chain is DNA-directed RNA polymerase subunit omega from Bartonella henselae (strain ATCC 49882 / DSM 28221 / CCUG 30454 / Houston 1) (Rochalimaea henselae).